The chain runs to 1279 residues: ATP-dependent helicase/nuclease subunit A (1279 aa).

In terms of domain architecture, UvrD-like helicase ATP-binding spans 4 to 499; it reads TKWTDEQRQA…VKLFKNFRSR (496 aa). An ATP-binding site is contributed by 25–32; it reads AGAGAGKT. The region spanning 526 to 853 is the UvrD-like helicase C-terminal domain; it reads EEALKVGASY…RIMSIHKSKG (328 aa).

This sequence belongs to the helicase family. AddA subfamily. In terms of assembly, heterodimer of AddA and AddB/RexB. Mg(2+) serves as cofactor.

It catalyses the reaction Couples ATP hydrolysis with the unwinding of duplex DNA by translocating in the 3'-5' direction.. It carries out the reaction ATP + H2O = ADP + phosphate + H(+). The heterodimer acts as both an ATP-dependent DNA helicase and an ATP-dependent, dual-direction single-stranded exonuclease. Recognizes the chi site generating a DNA molecule suitable for the initiation of homologous recombination. The AddA nuclease domain is required for chi fragment generation; this subunit has the helicase and 3' -&gt; 5' nuclease activities. The polypeptide is ATP-dependent helicase/nuclease subunit A (Clostridium botulinum (strain Kyoto / Type A2)).